The primary structure comprises 209 residues: MIFPIFFTFFLLLSSSHASVQDFCVADYKAPDGPAGYSCKKPAKVTINDFVYSGLGIAGNTTNIIKAAVTPAFAAQFPGVNGLGISLARLDLGPGGVIPFHTHPGASEVLLVVQGTIIAGFVASDNTPYLKTLKKGDIMVFPQGLLHFQVNGGGTPALAFPSFSSPSPGLQILDFALFKNDLPTELIAQTTFLDAAQIKKLKGVLGGTN.

Positions 1-18 (MIFPIFFTFFLLLSSSHA) are cleaved as a signal peptide. Cys24 and Cys39 are joined by a disulfide. The Cupin type-1 domain maps to 53–199 (SGLGIAGNTT…TTFLDAAQIK (147 aa)). Asn60 is a glycosylation site (N-linked (GlcNAc...) asparagine). Residues His101, His103, Glu108, and His147 each coordinate Mn(2+).

Belongs to the germin family. As to quaternary structure, interacts with ABP20.

Its subcellular location is the secreted. It is found in the extracellular space. The protein resides in the apoplast. The protein localises to the cell wall. In terms of biological role, probable receptor for the plant growth-promoting hormone auxin. The chain is Auxin-binding protein ABP19a (ABP19A) from Prunus persica (Peach).